Reading from the N-terminus, the 580-residue chain is 2-succinyl-5-enolpyruvyl-6-hydroxy-3-cyclohexene-1-carboxylate synthase (580 aa).

The protein belongs to the TPP enzyme family. MenD subfamily. Homodimer. It depends on Mg(2+) as a cofactor. Mn(2+) is required as a cofactor. The cofactor is thiamine diphosphate.

The catalysed reaction is isochorismate + 2-oxoglutarate + H(+) = 5-enolpyruvoyl-6-hydroxy-2-succinyl-cyclohex-3-ene-1-carboxylate + CO2. Its pathway is quinol/quinone metabolism; 1,4-dihydroxy-2-naphthoate biosynthesis; 1,4-dihydroxy-2-naphthoate from chorismate: step 2/7. It functions in the pathway quinol/quinone metabolism; menaquinone biosynthesis. Catalyzes the thiamine diphosphate-dependent decarboxylation of 2-oxoglutarate and the subsequent addition of the resulting succinic semialdehyde-thiamine pyrophosphate anion to isochorismate to yield 2-succinyl-5-enolpyruvyl-6-hydroxy-3-cyclohexene-1-carboxylate (SEPHCHC). This is 2-succinyl-5-enolpyruvyl-6-hydroxy-3-cyclohexene-1-carboxylate synthase from Listeria monocytogenes serovar 1/2a (strain ATCC BAA-679 / EGD-e).